The sequence spans 252 residues: MASLGINLDHIATVRQARRTVEPDPVHLALLAELGGADGITVHLREDRRHIQDRDVELLRQTVRTRLNLEMAATAEMVAIALTIKPDMVTLVPEKRQEVTTEGGLDVVSQAAALQGQISQLQGAGIPVSLFVDPERAQLQASQRSGARWVELHTGSYAEASWSQQPLELARLIEGTTEARQLGLRVNAGHGLTYQNVEPIAAISGMEELNIGHTVMARAMAVGLQEAVKQMKELVSAPRQEPLFGAGLAAES.

Asn7 contributes to the 3-amino-2-oxopropyl phosphate binding site. 9–10 (DH) serves as a coordination point for 1-deoxy-D-xylulose 5-phosphate. Arg18 is a binding site for 3-amino-2-oxopropyl phosphate. Residue His43 is the Proton acceptor of the active site. The 1-deoxy-D-xylulose 5-phosphate site is built by Arg45 and His50. The active-site Proton acceptor is Glu70. Residue Thr100 participates in 1-deoxy-D-xylulose 5-phosphate binding. His190 functions as the Proton donor in the catalytic mechanism. 3-amino-2-oxopropyl phosphate is bound by residues Gly191 and 212-213 (GH).

This sequence belongs to the PNP synthase family. Homooctamer; tetramer of dimers.

It is found in the cytoplasm. The enzyme catalyses 3-amino-2-oxopropyl phosphate + 1-deoxy-D-xylulose 5-phosphate = pyridoxine 5'-phosphate + phosphate + 2 H2O + H(+). It participates in cofactor biosynthesis; pyridoxine 5'-phosphate biosynthesis; pyridoxine 5'-phosphate from D-erythrose 4-phosphate: step 5/5. Functionally, catalyzes the complicated ring closure reaction between the two acyclic compounds 1-deoxy-D-xylulose-5-phosphate (DXP) and 3-amino-2-oxopropyl phosphate (1-amino-acetone-3-phosphate or AAP) to form pyridoxine 5'-phosphate (PNP) and inorganic phosphate. The chain is Pyridoxine 5'-phosphate synthase from Synechococcus sp. (strain RCC307).